We begin with the raw amino-acid sequence, 417 residues long: MFTKQSLVTLLGGLSLAVAQTTTEGYPSLAEIRAAQATVQPYSPVSNVKGLTFNRFVNIWLENTDFDAAAATEHLPVLAKKGLLLNNFWAVTHPSEPNYCRHLPLGDTFGMDNDDFHQIPSNVSTIADLFDTKNIAWGEYQEGLPYPGYQGYRYPESGANDYVRNRNPLILFDSVTEDALRLRQIKNFSSFYDDLENHRLPQYMFITPNMTNDGHDTNITFSGDWTWGFLSELLENDYFTKDTLIMLTFDETGTYEIGNNIYTFLLGGAVPDDLLGTKDDTFYTHYSVIASLSTNWGLPSLGRWDCGANLFSWLAKKTGYVNYEVDTSNLYMNETHWGPLSDDDYSEYYAGWPVPTTDASCSAGNGILSTVKKTYEGLTATFNYTTPFPYDSRSGNNVGVKYSRTLKNGKVESGTSE.

The N-terminal stretch at 1 to 19 (MFTKQSLVTLLGGLSLAVA) is a signal peptide. N-linked (GlcNAc...) asparagine glycosylation is found at Asn122, Asn187, and Asn209. The active-site Proton donor is Asp216. N-linked (GlcNAc...) asparagine glycans are attached at residues Asn218, Asn333, and Asn383.

Post-translationally, the N-terminus is blocked.

It localises to the secreted. The catalysed reaction is a phosphate monoester + H2O = an alcohol + phosphate. The polypeptide is Acid phosphatase (phoA) (Aspergillus niger).